Reading from the N-terminus, the 447-residue chain is GTPase Era, mitochondrial (447 aa).

Residues 1 to 18 (MTLRSCETFLRRSLRFST) constitute a mitochondrion transit peptide. The 232-residue stretch at 109–340 (KSLKVAIVGS…RYLFVAAKPC (232 aa)) folds into the Era-type G domain. The interval 117-124 (GSPNAGKS) is G1. 117 to 124 (GSPNAGKS) is a GTP binding site. A G2 region spans residues 143–147 (HTTRS). Residues 164-167 (DTPG) form a G3 region. GTP-binding positions include 164–168 (DTPGL) and 233–236 (NKVD). Residues 233-236 (NKVD) form a G4 region. Positions 318–320 (LSS) are G5. Residues 370 to 447 (LPKEVPYTMT…RLKISVKLRK (78 aa)) enclose the KH type-2 domain.

Belongs to the TRAFAC class TrmE-Era-EngA-EngB-Septin-like GTPase superfamily. Era GTPase family.

The protein localises to the mitochondrion matrix. It is found in the mitochondrion inner membrane. Functionally, probable GTPase that plays a role in the mitochondrial ribosomal small subunit assembly. Specifically binds the 12S mitochondrial rRNA (12S mt-rRNA) to a 33 nucleotide section delineating the 3' terminal stem-loop region. May act as a chaperone that protects the 12S mt-rRNA on the 28S mitoribosomal subunit during ribosomal small subunit assembly. The polypeptide is GTPase Era, mitochondrial (eral1) (Danio rerio (Zebrafish)).